A 198-amino-acid chain; its full sequence is CASP-like protein 1U1 (198 aa).

Topologically, residues 1–30 (MSDTPVVVIPRKGYVDGHHGYHHSYHSGLN) are cytoplasmic. A helical transmembrane segment spans residues 31–51 (LLLRLLQAFATAAAVIVMLLA). The Extracellular segment spans residues 52 to 73 (TQTEFTRYGEVRGRWRDYPAYK). Residues 74–94 (WFIIANAVVFVYALLATLVAC) traverse the membrane as a helical segment. Residues 95-117 (CALIARRGPLSYSPSAWLTFLLD) lie on the Cytoplasmic side of the membrane. The chain crosses the membrane as a helical span at residues 118–138 (FVAASALMSAASAALAVALIA). At 139–165 (RNGQNLQGQHYWPTFCNYVTRFCDYAQ) the chain is on the extracellular side. Residues 166-186 (GAIIASFCGFGLLALSTLLAA) form a helical membrane-spanning segment. At 187–198 (SALHHLAWHRLH) the chain is on the cytoplasmic side.

It belongs to the Casparian strip membrane proteins (CASP) family. In terms of assembly, homodimer and heterodimers.

The protein localises to the cell membrane. This is CASP-like protein 1U1 from Physcomitrium patens (Spreading-leaved earth moss).